Consider the following 36-residue polypeptide: Mating hormone A-factor 1 (36 aa).

A propeptide spanning residues 1 to 21 (MQPSTATAAPKEKTSSEKKDN) is cleaved from the precursor. C33 is subject to Cysteine methyl ester. The S-farnesyl cysteine moiety is linked to residue C33. Residues 34-36 (VIA) constitute a propeptide, removed in mature form.

Its subcellular location is the cell membrane. The active factor is excreted into the culture medium by haploid cells of the A mating type and acts on cells of the opposite mating type (type alpha). It mediates the conjugation process between the two types by inhibiting the initiation of DNA synthesis in type alpha cells and synchronizing them with type A. This is Mating hormone A-factor 1 (MFA1) from Saccharomyces cerevisiae (strain ATCC 204508 / S288c) (Baker's yeast).